The sequence spans 175 residues: MLTSGIILLSGGLLSPNPGLIFWTAVTFVIVLVILKKIAWGPIVSMLEEREKGIQSAIDRAHTAKEEAESILKKNKEMLAKADAEADKIIREGKEYADKVRSELTEKAQVESQKMIAAAKEEIEQEKRRALDVLRNEVADMAVKGAEKIIRTTLDADKQKAVVNDMINEMAAKRN.

Residues 20-40 (LIFWTAVTFVIVLVILKKIAW) form a helical membrane-spanning segment.

This sequence belongs to the ATPase B chain family. As to quaternary structure, F-type ATPases have 2 components, F(1) - the catalytic core - and F(0) - the membrane proton channel. F(1) has five subunits: alpha(3), beta(3), gamma(1), delta(1), epsilon(1). F(0) has four main subunits: a(1), b(2) and c(10-14). The alpha and beta chains form an alternating ring which encloses part of the gamma chain. F(1) is attached to F(0) by a central stalk formed by the gamma and epsilon chains, while a peripheral stalk is formed by the delta and b chains.

It is found in the cell inner membrane. In terms of biological role, f(1)F(0) ATP synthase produces ATP from ADP in the presence of a proton or sodium gradient. F-type ATPases consist of two structural domains, F(1) containing the extramembraneous catalytic core and F(0) containing the membrane proton channel, linked together by a central stalk and a peripheral stalk. During catalysis, ATP synthesis in the catalytic domain of F(1) is coupled via a rotary mechanism of the central stalk subunits to proton translocation. Its function is as follows. Component of the F(0) channel, it forms part of the peripheral stalk, linking F(1) to F(0). This chain is ATP synthase subunit b, found in Chlorobaculum parvum (strain DSM 263 / NCIMB 8327) (Chlorobium vibrioforme subsp. thiosulfatophilum).